The chain runs to 445 residues: MGKKDKRSKLEGDDLAEAQQKGSFQLPSSNETAKLDASQWPLLLKNYDKLNVRTNHYTPHVEGVSPLKRDIKNYISSGFFNLDKPSNPSSHEVVSWIKRILRCEKTGHSGTLDPKVSGCLIVCIDRTTRLAKSQQGAGKEYICIFKLHEEVEDDRKVKQALEKLTGALFQRPPLISAVKRQLRIRTVYENKFIEYDPAQQMGIFNCICESGTYVRTICVHLGLILGCGGQMQELRRNRSGICDENENMVTMHDVLDAQYLLDTQKDESYMRHIVRPLEALLTQHKRVVVKDSCINAICYGAKILIPGILRYDDDIEVGKEIVIMSTKGEAICIAIAQMNTSTIASVDHGVVAKSKRVIMERDVYGRKWGLGPVASKKKQMVKDGLLDKFGKPNDTTPKSWAKEYVQTSTKKEVKKEETPDEEEEEAPKKKSKKSKKQESSDSDSD.

A disordered region spans residues 1–32 (MGKKDKRSKLEGDDLAEAQQKGSFQLPSSNET). A compositionally biased stretch (polar residues) spans 20 to 32 (QKGSFQLPSSNET). Asp-113 serves as the catalytic Nucleophile. A PUA domain is found at 284-359 (HKRVVVKDSC…VVAKSKRVIM (76 aa)). A disordered region spans residues 386–445 (LDKFGKPNDTTPKSWAKEYVQTSTKKEVKKEETPDEEEEEAPKKKSKKSKKQESSDSDSD).

This sequence belongs to the pseudouridine synthase TruB family. In terms of assembly, component of the small nucleolar ribonucleoprotein particle containing H/ACA-type snoRNAs (H/ACA snoRNPs).

Its subcellular location is the nucleus. The protein localises to the nucleolus. It catalyses the reaction a uridine in RNA = a pseudouridine in RNA. Plays a central role in ribosomal RNA processing. Probable catalytic subunit of H/ACA small nucleolar ribonucleoprotein (H/ACA snoRNP) complex, which catalyzes pseudouridylation of rRNA. This involves the isomerization of uridine such that the ribose is subsequently attached to C5, instead of the normal N1. Pseudouridine ('psi') residues may serve to stabilize the conformation of rRNAs. This chain is Putative H/ACA ribonucleoprotein complex subunit 4, found in Caenorhabditis elegans.